Here is a 138-residue protein sequence, read N- to C-terminus: Cysteine desulfuration protein SufE (138 aa).

C51 acts as the Cysteine persulfide intermediate in catalysis.

The protein belongs to the SufE family. Homodimer. Interacts with SufS.

Its subcellular location is the cytoplasm. It functions in the pathway cofactor biosynthesis; iron-sulfur cluster biosynthesis. Functionally, participates in cysteine desulfuration mediated by SufS. Cysteine desulfuration mobilizes sulfur from L-cysteine to yield L-alanine and constitutes an essential step in sulfur metabolism for biosynthesis of a variety of sulfur-containing biomolecules. Functions as a sulfur acceptor for SufS, by mediating the direct transfer of the sulfur atom from the S-sulfanylcysteine of SufS, an intermediate product of cysteine desulfuration process. This Salmonella dublin (strain CT_02021853) protein is Cysteine desulfuration protein SufE.